We begin with the raw amino-acid sequence, 311 residues long: Homeobox protein Hox-B1a (311 aa).

The homeobox DNA-binding region spans 217–276; that stretch reads QNTIRTNFTTKQLTELEKEFHFSKYLTRARRVEIAATLELNETQVKIWFQNRRMKQKKRE. Residues 267-311 are disordered; sequence NRRMKQKKREKEGLAPASSTSSKDLEDQSDHSTSTSPEASPSPDS. Residues 298–311 are compositionally biased toward low complexity; it reads STSTSPEASPSPDS.

It belongs to the Antp homeobox family. Labial subfamily.

Its subcellular location is the nucleus. Its function is as follows. Sequence-specific transcription factor which is part of a developmental regulatory system that provides cells with specific positional identities on the anterior-posterior axis. This chain is Homeobox protein Hox-B1a (hoxb1a), found in Danio rerio (Zebrafish).